The sequence spans 105 residues: MQFYLILLAILYLIVSFISIFKMEVVFTRILRIIMGVLLLFVLALTTMSFPKENWWVFIVLLLLVGNVEVTGFKMLKKDLKGVNILNLMSLFIFVIYFILTIVLF.

The helical transmembrane segment at 1–21 threads the bilayer; that stretch reads MQFYLILLAILYLIVSFISIF. Residues 22–29 are Cytoplasmic-facing; sequence KMEVVFTR. A helical membrane pass occupies residues 30 to 50; the sequence is ILRIIMGVLLLFVLALTTMSF. Residues 51 to 55 lie on the Extracellular side of the membrane; sequence PKENW. Residues 56 to 76 form a helical membrane-spanning segment; sequence WVFIVLLLLVGNVEVTGFKML. Residues 77–84 are Cytoplasmic-facing; that stretch reads KKDLKGVN. The helical transmembrane segment at 85-105 threads the bilayer; it reads ILNLMSLFIFVIYFILTIVLF.

It belongs to the MspA family.

The protein resides in the membrane. Plays a role in toxin production, resistance to host innate immune mechanisms, and iron homeostasis. This chain is Membrane-stabilizing protein A, found in Staphylococcus aureus (strain NCTC 8325 / PS 47).